The following is a 180-amino-acid chain: uncharacterized protein (180 aa).

In terms of domain architecture, Nudix hydrolase spans 35–163 (LRHRATYIVV…TPDSLKALAL (129 aa)). A Nudix box motif is present at residues 72–94 (GGVVQADEQLLESARREAEEELG). Residues glutamate 88 and glutamate 92 each coordinate Mg(2+).

It belongs to the Nudix hydrolase family. It depends on Mg(2+) as a cofactor.

This is an uncharacterized protein from Escherichia coli O157:H7.